The following is a 67-amino-acid chain: MTDDIFSVPCPICQKQVEWSDKSPFRPFCCKRCQLIDLGEWAAEEKAIPCESADFAMNDEQEDWRAH.

Zn(2+) contacts are provided by C10, C13, C29, and C33.

The protein belongs to the DNA gyrase inhibitor YacG family. In terms of assembly, interacts with GyrB. The cofactor is Zn(2+).

Its function is as follows. Inhibits all the catalytic activities of DNA gyrase by preventing its interaction with DNA. Acts by binding directly to the C-terminal domain of GyrB, which probably disrupts DNA binding by the gyrase. The protein is DNA gyrase inhibitor YacG of Pasteurella multocida (strain Pm70).